The following is a 1359-amino-acid chain: Nuclear protein STH1/NPS1 (1359 aa).

Serine 38 carries the post-translational modification Phosphoserine. The HSA domain occupies 307–383 (LERQQLLEKR…AKQRLAALKS (77 aa)). The region spanning 482–647 (VSLYNNHLNG…WALLNFVLPK (166 aa)) is the Helicase ATP-binding domain. 495–502 (DEMGLGKT) is an ATP binding site. Residues 597-600 (DEGH) carry the DEGH box motif. The Helicase C-terminal domain maps to 795 to 956 (LLDRVLPKFK…NKSTAEEQEA (162 aa)). The disordered stretch occupies residues 1090 to 1246 (RERRRLRQNG…TAAKKTKTKS (157 aa)). The span at 1108–1126 (LENTPEASETSLIENNSFT) shows a compositional bias: polar residues. 2 stretches are compositionally biased toward basic residues: residues 1143 to 1154 (RSKRRSSRKKRT) and 1198 to 1210 (KKKK…KIKL). Residues 1219–1232 (NDGKRAEEKPESKS) are compositionally biased toward basic and acidic residues. Residues 1233–1246 (PAKKTAAKKTKTKS) are compositionally biased toward basic residues. The Bromo domain maps to 1257–1357 (KLVEEMREQL…EFTDEWFKEH (101 aa)).

The protein belongs to the SNF2/RAD54 helicase family. Interacts directly with SFH1, CSE4, histones H3, H4 and H2B, and via its N-terminus, with RSC8. Interacts with LDB7, NPL6 and RTT102. Component of the two forms of the RSC complex composed of at least either RSC1 or RSC2, and ARP7, ARP9, LDB7, NPL6, RSC3, RSC30, RSC4, RSC58, RSC6, RSC8, RSC9, SFH1, STH1, HTL1 and probably RTT102. The complexes interact with histone and histone variant components of centromeric chromatin.

The protein localises to the nucleus. It catalyses the reaction ATP + H2O = ADP + phosphate + H(+). Catalytic component of the chromatin structure-remodeling complex (RSC), which is involved in transcription regulation and nucleosome positioning. RSC is responsible for the transfer of a histone octamer from a nucleosome core particle to naked DNA. The reaction requires ATP and involves an activated RSC-nucleosome intermediate. Remodeling reaction also involves DNA translocation, DNA twist and conformational change. As a reconfigurer of centromeric and flanking nucleosomes, RSC complex is required both for proper kinetochore function in chromosome segregation and, via a PKC1-dependent signaling pathway, for organization of the cellular cytoskeleton. This subunit is the essential ATPase of the complex. It is a DNA translocase capable of nucleosome remodeling. Required for full expression of early meiotic genes. Essential for mitotic growth and repression of CHA1 expression. Also involved in G2 phase control. This is Nuclear protein STH1/NPS1 (STH1) from Saccharomyces cerevisiae (strain ATCC 204508 / S288c) (Baker's yeast).